The chain runs to 938 residues: Isoleucine--tRNA ligase (938 aa).

The 'HIGH' region signature appears at 58–68 (PYANGNIHLGH). E562 contacts L-isoleucyl-5'-AMP. The short motif at 603–607 (KMSKS) is the 'KMSKS' region element. Residue K606 participates in ATP binding. The Zn(2+) site is built by C901, C904, C921, and C924.

It belongs to the class-I aminoacyl-tRNA synthetase family. IleS type 1 subfamily. In terms of assembly, monomer. Requires Zn(2+) as cofactor.

Its subcellular location is the cytoplasm. It carries out the reaction tRNA(Ile) + L-isoleucine + ATP = L-isoleucyl-tRNA(Ile) + AMP + diphosphate. Its function is as follows. Catalyzes the attachment of isoleucine to tRNA(Ile). As IleRS can inadvertently accommodate and process structurally similar amino acids such as valine, to avoid such errors it has two additional distinct tRNA(Ile)-dependent editing activities. One activity is designated as 'pretransfer' editing and involves the hydrolysis of activated Val-AMP. The other activity is designated 'posttransfer' editing and involves deacylation of mischarged Val-tRNA(Ile). The polypeptide is Isoleucine--tRNA ligase (Glaesserella parasuis serovar 5 (strain SH0165) (Haemophilus parasuis)).